The following is a 420-amino-acid chain: Methionine aminopeptidase 2 (420 aa).

The interval 1-48 (MSDAIAKDAVNTSSEKEPVSATPELKTSGSPDAAVSSGDKKKKKKKKK) is disordered. Position 172 (His172) interacts with substrate. The a divalent metal cation site is built by Asp192, Asp203, and His272. His280 contacts substrate. Glu305 and Glu401 together coordinate a divalent metal cation.

Belongs to the peptidase M24A family. Methionine aminopeptidase eukaryotic type 2 subfamily. The cofactor is Co(2+). Zn(2+) is required as a cofactor. Mn(2+) serves as cofactor. Requires Fe(2+) as cofactor.

The protein localises to the cytoplasm. It carries out the reaction Release of N-terminal amino acids, preferentially methionine, from peptides and arylamides.. Cotranslationally removes the N-terminal methionine from nascent proteins. The N-terminal methionine is often cleaved when the second residue in the primary sequence is small and uncharged (Met-Ala-, Cys, Gly, Pro, Ser, Thr, or Val). The polypeptide is Methionine aminopeptidase 2 (Lachancea thermotolerans (strain ATCC 56472 / CBS 6340 / NRRL Y-8284) (Yeast)).